The chain runs to 695 residues: Elongation factor G (695 aa).

Residues 8–282 (EKTRNIGIMA…AVLDYLPAPT (275 aa)) enclose the tr-type G domain. GTP contacts are provided by residues 17-24 (AHIDAGKT), 81-85 (DTPGH), and 135-138 (NKMD).

Belongs to the TRAFAC class translation factor GTPase superfamily. Classic translation factor GTPase family. EF-G/EF-2 subfamily.

It is found in the cytoplasm. Functionally, catalyzes the GTP-dependent ribosomal translocation step during translation elongation. During this step, the ribosome changes from the pre-translocational (PRE) to the post-translocational (POST) state as the newly formed A-site-bound peptidyl-tRNA and P-site-bound deacylated tRNA move to the P and E sites, respectively. Catalyzes the coordinated movement of the two tRNA molecules, the mRNA and conformational changes in the ribosome. The chain is Elongation factor G from Listeria monocytogenes serotype 4b (strain CLIP80459).